Consider the following 262-residue polypeptide: 3-dehydro-D-guloside 4-epimerase (262 aa).

Catalysis depends on Glu-146, which acts as the Proton donor/acceptor. Glu-146 and Asp-179 together coordinate Mn(2+). His-182 is a substrate binding site. His-205 serves as a coordination point for Mn(2+). Arg-211 lines the substrate pocket. The active-site Proton donor/acceptor is the Glu-240. Glu-240 contributes to the Mn(2+) binding site.

It belongs to the hyi family. The cofactor is Mn(2+).

It catalyses the reaction a 3-dehydro-D-guloside = a 3-dehydro-D-glucoside. Its function is as follows. Catalyzes the epimerization at C4 of 3-dehydro-D-gulosides leading to 3-dehydro-D-glucosides. Probably functions in a metabolic pathway that transforms D-gulosides to D-glucosides. Can use methyl alpha-3-dehydro-D-glucoside and methyl beta-3-dehydro-D-glucoside as substrates in vitro. However, the actual specific physiological substrates for this metabolic pathway are unknown. Cannot act on D-psicose, D-fructose, D-tagatose, D-sorbose, L-xylulose, or L-ribulose. This Escherichia coli (strain K12) protein is 3-dehydro-D-guloside 4-epimerase (ycjR).